A 59-amino-acid chain; its full sequence is Large ribosomal subunit protein uL30 (59 aa).

This sequence belongs to the universal ribosomal protein uL30 family. As to quaternary structure, part of the 50S ribosomal subunit.

This chain is Large ribosomal subunit protein uL30, found in Clostridium kluyveri (strain ATCC 8527 / DSM 555 / NBRC 12016 / NCIMB 10680 / K1).